Consider the following 65-residue polypeptide: Large ribosomal subunit protein uL29 (65 aa).

The protein belongs to the universal ribosomal protein uL29 family.

In Buchnera aphidicola subsp. Acyrthosiphon pisum (strain APS) (Acyrthosiphon pisum symbiotic bacterium), this protein is Large ribosomal subunit protein uL29 (rpmC).